The primary structure comprises 286 residues: Bifunctional protein FolD (286 aa).

NADP(+) is bound by residues 165–167 and Ser190; that span reads GRS.

This sequence belongs to the tetrahydrofolate dehydrogenase/cyclohydrolase family. Homodimer.

It catalyses the reaction (6R)-5,10-methylene-5,6,7,8-tetrahydrofolate + NADP(+) = (6R)-5,10-methenyltetrahydrofolate + NADPH. It carries out the reaction (6R)-5,10-methenyltetrahydrofolate + H2O = (6R)-10-formyltetrahydrofolate + H(+). The protein operates within one-carbon metabolism; tetrahydrofolate interconversion. In terms of biological role, catalyzes the oxidation of 5,10-methylenetetrahydrofolate to 5,10-methenyltetrahydrofolate and then the hydrolysis of 5,10-methenyltetrahydrofolate to 10-formyltetrahydrofolate. This chain is Bifunctional protein FolD, found in Burkholderia orbicola (strain MC0-3).